The chain runs to 6548 residues: Epiplakin (6548 aa).

A Phosphothreonine modification is found at Thr-33. Plectin repeat units follow at residues 41-78 (AALP…TGLG), 79-116 (LTLL…LELK), 117-154 (EKLL…RTLG), 155-192 (WRLL…KETW), 285-322 (RRYL…KGIA), 323-360 (LQLL…PELH), 362-398 (QLLV…QPLA), 399-436 (LRLL…EETR), and 437-470 (QRLS…PETG). The tract at residues 49-1123 (SIAGVYVEAS…KASGLHLLPL (1075 aa)) is interaction with KRT5. Residues 545-565 (SVEELAAELKNIVEQAAATAK) adopt a coiled-coil conformation. Plectin repeat units follow at residues 611–648 (QRYL…PGTA), 649–686 (LILL…PDVY), 687–724 (AKLL…RDHG), 725–762 (IRLL…QILN), and 766–800 (LDPS…SETG). Positions 851 to 886 (TEDRRRQLLQRYRQRKITLEQVTQLLEKEMRRWTDI) form a coiled coil. Plectin repeat units lie at residues 931–968 (HRYL…PSTA), 969–1006 (LALL…AEVY), 1007–1044 (GKLK…VEQA), 1224–1284 (QETL…TGLG), 1285–1322 (QQLL…MEQS), 1323–1360 (EHLR…QSEA), 1361–1398 (FPLL…EQTS), and 1402–1436 (TATG…ADTG). Thr-1551 is modified (phosphothreonine). Plectin repeat units lie at residues 1572–1609 (RRSL…PGTA), 1610–1647 (LVLL…KETY), 1648–1685 (MKLL…RDHG), 1686–1723 (IRLL…EEMN), and 1727–1761 (SDPS…PETG). The interaction with KRT5 stretch occupies residues 1580–6545 (FIAGVLIQDT…PETGLLFLSL (4966 aa)). The stretch at 1819 to 1851 (RKLLREYRAQNIGLENLLEVITSTVEETEKQSQ) forms a coiled coil. Plectin repeat units follow at residues 1898-1935 (RVYL…AGFA), 1936-1973 (AQML…EDLR), 1974-2011 (ERLV…REEA), 2012-2049 (LRLL…DDSL), 2225-2267 (KRYL…PGTA), 2268-2305 (LVLL…GEIQ), 2306-2343 (EKLL…RDHG), 2344-2381 (IRLL…EDMN), and 2385-2419 (ADPG…PETG). A phosphoserine mark is found at Ser-2430 and Ser-2508. Residues 2578–2626 (AEETQESKPKPRDASLKQQDTGARGSGTSPDEGDAQDSSESARQQQEQT) form a disordered region. Over residues 2582–2592 (QESKPKPRDAS) the composition is skewed to basic and acidic residues. 2 stretches are compositionally biased toward polar residues: residues 2593-2606 (LKQQ…SGTS) and 2615-2626 (SSESARQQQEQT). Plectin repeat units follow at residues 2740–2782 (KRYL…PGTA), 2783–2820 (LVLL…GEIQ), 2821–2858 (EKLL…RDHG), 2859–2896 (IRLL…EDMN), and 2900–2934 (ADPG…PETG). Residues 2748–2940 (CIAGVLVPVQ…PETGFYMLQL (193 aa)) are interaction with KRT14. Residues 3093–3144 (AEETQESKPKPRDASLKQQDTGARGSGTSPDEGDAQDSSESARQQQEQTLRA) are disordered. Residues 3097–3107 (QESKPKPRDAS) are compositionally biased toward basic and acidic residues. Composition is skewed to polar residues over residues 3108–3121 (LKQQ…SGTS) and 3130–3144 (SSES…TLRA). At Ser-3220 the chain carries Phosphoserine. Plectin repeat units follow at residues 3255–3297 (KRYL…PGTA), 3298–3335 (LVLL…GEIQ), 3336–3373 (EKLL…RDHG), 3374–3411 (IRLL…EDMN), and 3415–3449 (ADPG…PETG). Phosphoserine occurs at positions 3460 and 3538. The segment at 3608-3659 (AEETQESKPKPRDASLKQQDTGARGSGTSPDEGDAQDSSESARQQQEQTLRA) is disordered. Residues 3612 to 3622 (QESKPKPRDAS) show a composition bias toward basic and acidic residues. 2 stretches are compositionally biased toward polar residues: residues 3623-3636 (LKQQ…SGTS) and 3645-3659 (SSES…TLRA). The residue at position 3735 (Ser-3735) is a Phosphoserine. 5 Plectin repeats span residues 3770-3812 (KRYL…PGTA), 3813-3850 (LVLL…GEIQ), 3851-3888 (EKLL…RDHG), 3889-3926 (IRLL…EDMN), and 3930-3964 (ADPG…PETG). Phosphoserine occurs at positions 3975 and 4053. The disordered stretch occupies residues 4123 to 4174 (AEETQESKPKPRDASLKQQDTGARGSGTSPDEGDAQDSSESARQQQEQTLRA). Residues 4127–4137 (QESKPKPRDAS) are compositionally biased toward basic and acidic residues. 2 stretches are compositionally biased toward polar residues: residues 4138–4151 (LKQQ…SGTS) and 4160–4174 (SSES…TLRA). Plectin repeat units lie at residues 4285–4327 (KRYL…PGTA), 4328–4365 (LVLL…GEIQ), 4366–4403 (EKLL…RDHG), 4404–4441 (IRLL…EDMN), and 4445–4479 (ADPG…PETG). Residues 4638–4689 (AEETQESKPKPRDASLKQQDTGARGSGTSPDEGDAQDSSESARQQQEQTLRA) are disordered. Basic and acidic residues predominate over residues 4642-4652 (QESKPKPRDAS). Composition is skewed to polar residues over residues 4653–4666 (LKQQ…SGTS) and 4675–4689 (SSES…TLRA). Position 4765 is a phosphoserine (Ser-4765). Plectin repeat units lie at residues 4800 to 4842 (KRYL…PGTA), 4843 to 4880 (LVLL…GEIQ), 4881 to 4918 (EKLL…RDHG), 4919 to 4956 (IRLL…EDMN), and 4960 to 4994 (ADPG…PETG). Residues Ser-5005 and Ser-5083 each carry the phosphoserine modification. The interval 5153–5204 (AEETQESKPKPRDASLKQQDTGARGSGTSPDEGDAQDSSESARQQQEQTLRA) is disordered. Over residues 5157 to 5167 (QESKPKPRDAS) the composition is skewed to basic and acidic residues. Polar residues-rich tracts occupy residues 5168–5181 (LKQQ…SGTS) and 5190–5204 (SSES…TLRA). 5 Plectin repeats span residues 5315–5357 (KRYL…PGTA), 5358–5395 (LVLL…GEIQ), 5396–5433 (EKLL…RDHG), 5434–5471 (IRLL…EDMN), and 5475–5509 (ADPG…PETG). Residues 5668–5719 (AEETQESKPKPRDASLKQQDTGARGSGTSPDEGDAQDSSESARQQQEQTLRA) form a disordered region. Residues 5672–5682 (QESKPKPRDAS) are compositionally biased toward basic and acidic residues. 2 stretches are compositionally biased toward polar residues: residues 5683–5696 (LKQQ…SGTS) and 5705–5719 (SSES…TLRA). Position 5795 is a phosphoserine (Ser-5795). Plectin repeat units lie at residues 5830–5872 (KRYL…PGTA), 5873–5910 (LVLL…GEIQ), 5911–5948 (EKLL…RDHG), 5949–5986 (IRLL…EDMN), and 5990–6024 (ADPG…PETG). Residues Ser-6035 and Ser-6113 each carry the phosphoserine modification. A disordered region spans residues 6183 to 6234 (AEETQESKPKPRDASLKQQDTGARGSGTSPDEGDAQDSSESARQQQEQTLRA). Residues 6187–6197 (QESKPKPRDAS) are compositionally biased toward basic and acidic residues. Polar residues-rich tracts occupy residues 6198–6211 (LKQQ…SGTS) and 6220–6234 (SSES…TLRA). Ser-6310 bears the Phosphoserine mark. Plectin repeat units lie at residues 6345 to 6387 (KRYL…PGTA), 6388 to 6425 (LVLL…GEIQ), 6426 to 6463 (EKLL…KNHG), 6464 to 6501 (IRLL…QEMN), and 6505 to 6539 (ADPG…PETG).

This sequence belongs to the plakin or cytolinker family. In terms of assembly, interacts with KRT5, KRT14 and KRT5/KRT14 heterotetramer; interacts preferentially with assembled filaments rather than keratin monomers. Interacts with KRT8 and KRT18 and KRT8/KRT18 heterotetramer; interacts preferentially with assembled filaments rather than keratin monomers. Interacts with KRT1, VIM and DES; interaction is stronger with KRT1 than with VIM or DES; interaction is dependent of higher-order structure of intermediate filament. As to expression, high levels in skin, small intestine and salivary gland. Lower levels in lung, uterus and liver. Not detected in brain, kidney, muscle, heart or spleen. In skin, expressed in all epidermal layers but not in the dermis. In intestine, expressed exclusively in the epithelial cell layer of the villi. In liver, expressed at hepatocyte margins. Around the region of the wound, expressed in the upper half of the epidermis. Weakly expressed on the basilar side of the suprabasal layer of the epidermis at the wound's edge. Expressed strongly in the upper layer of the epidermis, especially in larger keratinocytes. Expressed in undifferentiated primary keratinocytes. Strongly expressed in ductal cells, and also expressed in acinar cells. Expressed in hepatocytes and cholangiocytes.

It is found in the cytoplasm. The protein localises to the cytoskeleton. Its subcellular location is the apicolateral cell membrane. It localises to the basolateral cell membrane. The protein resides in the cell junction. It is found in the hemidesmosome. The protein localises to the tight junction. Its subcellular location is the cell projection. In terms of biological role, cytoskeletal linker protein that connects to intermediate filaments and controls their reorganization in response to stress. In response to mechanical stress like wound healing, is associated with the machinery for cellular motility by slowing down keratinocyte migration and proliferation and accelerating keratin bundling in proliferating keratinocytes thus contributing to tissue architecture. However in wound healing in corneal epithelium also positively regulates cell differentiation and proliferation and negatively regulates migration thereby controlling corneal epithelium morphogenesis and integrity. In response to cellular stress, plays a role in keratin filament reorganization, probably by protecting keratin filaments against disruption. During liver and pancreas injuries, plays a protective role by chaperoning disease-induced intermediate filament reorganization. This Mus musculus (Mouse) protein is Epiplakin.